The following is a 289-amino-acid chain: YLVSPAGYAALGAYMFLLILVGFPVNFLTLYVTLEHKKLRTPLNYILLNLAVADLFMVLGGFTTTMYTSMHGYFVLGRLGCNLEGFFVTLGGEIALWSLVVLAIERWIGVFKSIRNFRFTEDHAIMGLGFSWVMAATCAVPPLVGWLRYIPEGMQCSCGVDYYTRAEGFNNESFVIYMFIVHFLIPLIVIFFCYGRLLCAVKEAAAAQQESETTQRAEKEVSRMVVIMVIGYLVCWLPYASVAWWIFCNQGSEFGPIFMTLPAFFAKSPAIYNPLIYICMNKQFPHCMI.

The Extracellular segment spans residues 1–7; the sequence is YLVSPAG. Residues 8-32 form a helical membrane-spanning segment; that stretch reads YAALGAYMFLLILVGFPVNFLTLYV. Over 33–44 the chain is Cytoplasmic; the sequence is TLEHKKLRTPLN. Residues 45 to 67 traverse the membrane as a helical segment; sequence YILLNLAVADLFMVLGGFTTTMY. Over 68–81 the chain is Extracellular; it reads TSMHGYFVLGRLGC. C81 and C158 are oxidised to a cystine. A helical transmembrane segment spans residues 82-104; it reads NLEGFFVTLGGEIALWSLVVLAI. The short motif at 105-107 is the 'Ionic lock' involved in activated form stabilization element; sequence ERW. Topologically, residues 105–123 are cytoplasmic; sequence ERWIGVFKSIRNFRFTEDH. Residues 124–144 traverse the membrane as a helical segment; that stretch reads AIMGLGFSWVMAATCAVPPLV. The Extracellular portion of the chain corresponds to 145 to 173; sequence GWLRYIPEGMQCSCGVDYYTRAEGFNNES. The N-linked (GlcNAc...) asparagine glycan is linked to N171. Residues 174–195 form a helical membrane-spanning segment; it reads FVIYMFIVHFLIPLIVIFFCYG. Over 196 to 223 the chain is Cytoplasmic; the sequence is RLLCAVKEAAAAQQESETTQRAEKEVSR. Residues 224–245 form a helical membrane-spanning segment; that stretch reads MVVIMVIGYLVCWLPYASVAWW. The Extracellular segment spans residues 246–257; it reads IFCNQGSEFGPI. A helical transmembrane segment spans residues 258 to 279; that stretch reads FMTLPAFFAKSPAIYNPLIYIC. The residue at position 267 (K267) is an N6-(retinylidene)lysine. The Cytoplasmic portion of the chain corresponds to 280-289; that stretch reads MNKQFPHCMI.

It belongs to the G-protein coupled receptor 1 family. Opsin subfamily. Post-translationally, phosphorylated on some or all of the serine and threonine residues present in the C-terminal region. In terms of processing, contains one covalently linked retinal chromophore.

It localises to the membrane. Its subcellular location is the cell projection. It is found in the cilium. The protein resides in the photoreceptor outer segment. Its function is as follows. Photoreceptor required for image-forming vision at low light intensity. While most salt water fish species use retinal as chromophore, most freshwater fish use 3-dehydroretinal, or a mixture of retinal and 3-dehydroretinal. Light-induced isomerization of 11-cis to all-trans retinal triggers a conformational change that activates signaling via G-proteins. Subsequent receptor phosphorylation mediates displacement of the bound G-protein alpha subunit by arrestin and terminates signaling. The protein is Rhodopsin (rho) of Leocottus kesslerii (Kessler's sculpin).